Reading from the N-terminus, the 258-residue chain is NAD kinase (258 aa).

D51 functions as the Proton acceptor in the catalytic mechanism. Residues 51 to 52, K56, 119 to 120, K130, D149, 160 to 165, and A184 contribute to the NAD(+) site; these read DG, ND, and TAYSLS.

It belongs to the NAD kinase family. A divalent metal cation serves as cofactor.

The protein resides in the cytoplasm. It catalyses the reaction NAD(+) + ATP = ADP + NADP(+) + H(+). Involved in the regulation of the intracellular balance of NAD and NADP, and is a key enzyme in the biosynthesis of NADP. Catalyzes specifically the phosphorylation on 2'-hydroxyl of the adenosine moiety of NAD to yield NADP. The protein is NAD kinase of Thermotoga petrophila (strain ATCC BAA-488 / DSM 13995 / JCM 10881 / RKU-1).